The sequence spans 249 residues: Transmembrane protein 150C (249 aa).

Residues 1 to 9 (MDGKKCSVW) are Cytoplasmic-facing. Residues 10-30 (MFLPLVFTVFTSAGLWIVYFI) traverse the membrane as a helical segment. Residues 31–64 (AVEDDKIFPLNSAERKPGVKHAPYISIAGDEPPA) lie on the Extracellular side of the membrane. A helical membrane pass occupies residues 65–85 (SCVFSQVMNMAAFLALVVAVL). At 86-97 (RFIQLKPKVLNP) the chain is on the cytoplasmic side. Residues 98–118 (WLNISGLVALCLASFGMTLLG) traverse the membrane as a helical segment. Residues 119–130 (NFQLTNDEEIHN) lie on the Extracellular side of the membrane. A helical transmembrane segment spans residues 131 to 151 (VGTSLTFGFGTLTCWIQAALT). Over 152 to 168 (LKVNIKNEGRKVGIPRV) the chain is Cytoplasmic. The chain crosses the membrane as a helical span at residues 169–189 (ILSASITLCVVLYFILMAQGI). At 190-192 (HMY) the chain is on the extracellular side. The helical transmembrane segment at 193–213 (AARVQWGLVMCFLSYFGTFAV) threads the bilayer. Residues 214–249 (EFRHYRYEIVCSEYQENFLSFSESLSEASEYQTDQV) are Cytoplasmic-facing.

It belongs to the DRAM/TMEM150 family.

It localises to the cell membrane. Its subcellular location is the lysosome membrane. The enzyme catalyses Ca(2+)(in) = Ca(2+)(out). It catalyses the reaction Na(+)(in) = Na(+)(out). The catalysed reaction is K(+)(in) = K(+)(out). It carries out the reaction Mg(2+)(in) = Mg(2+)(out). Functionally, nonselective cationic channel with high permeability to Ca(2+). Component of a mechanosensitive cation channel. Confers mechanically activated (MA) currents with slow inactivation kinetics. May contribute to proprioception. The polypeptide is Transmembrane protein 150C (TMEM150C) (Bos taurus (Bovine)).